The sequence spans 355 residues: Nuclear speckle splicing regulatory protein 1 homolog (355 aa).

The segment at 1-57 (MSGTGFRYGLNVMKKKKPNESSNRITFTEDDSSSSEQEHAPIPNSFSSQITAASDAS) is disordered. Residues 44 to 54 (NSFSSQITAAS) show a composition bias toward polar residues. Residues 99 to 162 (MENLIESAKK…EDRKEEDEKS (64 aa)) are a coiled coil. 2 disordered regions span residues 253 to 292 (SANN…HGTY) and 325 to 355 (KIHA…ATNP). The segment covering 280–289 (YHQDRPDKRH) has biased composition (basic and acidic residues). Residues 293-326 (SLEEIDKQRKEFENRQRLQKEKEFQKSREAALKI) adopt a coiled-coil conformation. Residues 329–339 (SRNTTETQVQS) show a composition bias toward polar residues. The span at 346 to 355 (QRKKKAATNP) shows a compositional bias: basic residues.

This sequence belongs to the NSRP1 family.

The sequence is that of Nuclear speckle splicing regulatory protein 1 homolog from Schizosaccharomyces pombe (strain 972 / ATCC 24843) (Fission yeast).